Reading from the N-terminus, the 171-residue chain is Ribosome maturation factor RimM (171 aa).

The PRC barrel domain occupies 97–170; it reads EGEYYYHEVI…QVTIHVMEGL (74 aa).

The protein belongs to the RimM family. In terms of assembly, binds ribosomal protein uS19.

It is found in the cytoplasm. Functionally, an accessory protein needed during the final step in the assembly of 30S ribosomal subunit, possibly for assembly of the head region. Essential for efficient processing of 16S rRNA. May be needed both before and after RbfA during the maturation of 16S rRNA. It has affinity for free ribosomal 30S subunits but not for 70S ribosomes. In Bacillus cytotoxicus (strain DSM 22905 / CIP 110041 / 391-98 / NVH 391-98), this protein is Ribosome maturation factor RimM.